The primary structure comprises 480 residues: Aspartyl/glutamyl-tRNA(Asn/Gln) amidotransferase subunit B (480 aa).

Belongs to the GatB/GatE family. GatB subfamily. In terms of assembly, heterotrimer of A, B and C subunits.

The enzyme catalyses L-glutamyl-tRNA(Gln) + L-glutamine + ATP + H2O = L-glutaminyl-tRNA(Gln) + L-glutamate + ADP + phosphate + H(+). It carries out the reaction L-aspartyl-tRNA(Asn) + L-glutamine + ATP + H2O = L-asparaginyl-tRNA(Asn) + L-glutamate + ADP + phosphate + 2 H(+). Its function is as follows. Allows the formation of correctly charged Asn-tRNA(Asn) or Gln-tRNA(Gln) through the transamidation of misacylated Asp-tRNA(Asn) or Glu-tRNA(Gln) in organisms which lack either or both of asparaginyl-tRNA or glutaminyl-tRNA synthetases. The reaction takes place in the presence of glutamine and ATP through an activated phospho-Asp-tRNA(Asn) or phospho-Glu-tRNA(Gln). The protein is Aspartyl/glutamyl-tRNA(Asn/Gln) amidotransferase subunit B of Streptococcus pneumoniae serotype 19F (strain G54).